A 426-amino-acid polypeptide reads, in one-letter code: uncharacterized protein (426 aa).

The signal sequence occupies residues 1–23 (MKKFILFLIILLFSIYFLNVSSA).

This is an uncharacterized protein from Methanocaldococcus jannaschii (strain ATCC 43067 / DSM 2661 / JAL-1 / JCM 10045 / NBRC 100440) (Methanococcus jannaschii).